The following is a 558-amino-acid chain: MSNTWWWLSVVLLILGLMPGMSQQAALAESDYYTAGVVEFKQSILSLSAWSDSLAGYVEIINSENASATDIIVFPESTLNSAGSTTFVPNPEDQINPCLSDPNATYYEEFLVTLSCAARNASKYIVINLTEKQKCEDIPEDTRPCASNGLNVFNTNVVFDRQGVVVSRYRKVHLYGEAKNSTFLPELITFETDFGVTFGHFICFDILFYTPAHQLIVEQGITDFVYPAMWFSQLPFLTAVQTQQGWAYANDVNLLASGASRPSIGNSGSGIYHGRSGTLTSVMRQDSGERAIYVAQVPKYTRSRSLKKRAKRSLQEIQTRQVASSSSFYMKRDYVENYESELLKLDEGTSGAINRTICQGSFCCNFDIAWRSLGTATENGSYYSYRLGTYDGWRNENNVDANYIRNCALFTCSGDSIDDCGKLLPTEGELQQSRVTFTRLAIGVTYPESREFLLFPDTLQDSLLPLEPSQFEWSQRKPTEDSYVQEVRFALKETQELSNLLTFGIYGNYYDNECTFGVGTEEEQLACGYRSGSPGLRILGGWLAMPLIILAIARTMSS.

The N-terminal stretch at 1-22 is a signal peptide; that stretch reads MSNTWWWLSVVLLILGLMPGMS. The region spanning 33 to 299 is the CN hydrolase domain; it reads YTAGVVEFKQ…RAIYVAQVPK (267 aa). N-linked (GlcNAc...) asparagine glycosylation occurs at Asn-65. Residue Glu-76 is the Proton acceptor of the active site. 3 N-linked (GlcNAc...) asparagine glycosylation sites follow: Asn-103, Asn-120, and Asn-128. Residue Lys-171 is the Proton donor of the active site. Asn-180 carries an N-linked (GlcNAc...) asparagine glycan. Catalysis depends on Cys-203, which acts as the Nucleophile. Asn-354 and Asn-379 each carry an N-linked (GlcNAc...) asparagine glycan. Ser-531 carries GPI-anchor amidated serine lipidation. Residues 532–558 constitute a propeptide, removed in mature form; that stretch reads GSPGLRILGGWLAMPLIILAIARTMSS.

Belongs to the carbon-nitrogen hydrolase superfamily. BTD/VNN family. As to expression, expressed in larvae and early pupae. Expressed in third instar larvae.

The protein resides in the cell membrane. The chain is Vanin-like protein 1 from Drosophila melanogaster (Fruit fly).